Reading from the N-terminus, the 105-residue chain is Dicamba O-demethylase, ferredoxin component (105 aa).

A 2Fe-2S ferredoxin-type domain is found at 2-105; sequence PQITVVNQSG…GIKVTIAQED (104 aa). The [2Fe-2S] cluster site is built by cysteine 40, cysteine 46, cysteine 49, and cysteine 86.

This sequence belongs to the adrenodoxin/putidaredoxin family. In terms of assembly, monomer. The dicamba O-demethylase multicomponent enzyme system is composed of an oxygenase component (DdmC) and an electron transfer component formed by a ferredoxin reductase (DdmA1) and a ferredoxin (DdmB). In vitro, dicamba O-demethylase assays in which DdmA2 is substituted for DdmA1 demonstrate that the two enzymes possess nearly identical activities. It depends on [2Fe-2S] cluster as a cofactor.

In terms of biological role, component of the dicamba O-demethylase multicomponent enzyme system involved in the degradation of the herbicide dicamba. In vitro, functions as an intermediate electron transfer protein. This chain is Dicamba O-demethylase, ferredoxin component, found in Stenotrophomonas maltophilia (Pseudomonas maltophilia).